Consider the following 321-residue polypeptide: MDKKITIAQIKEVAQQAYDLYKTNTDGKNADYIPYLANINKNLFGISICLLNGQTIEVGDSEYRFGIESVSKVHTAILVLRQYGAKELLEKIGADATGLPFNSIIAILLENDHPSTPLVNAGAITACSMVKPVGDSKQKWDAIVANITDLCGSAPQLIDELYKSESATNFNNRSIAWLLKNYNRIYDDPDMSLDLYTRQCSLGITAKQLSVAAATVANLGLNPVTKKQVFDAELSPKITSMISTVGFYEHTGDWLYTSGIPAKTGVGGGVMGVLPGQFGISAFAPPIDQAGNSVKAQLAIKYVMNKLGLNVFNGHRVTIVD.

Substrate is bound by residues serine 69, asparagine 120, glutamate 165, asparagine 172, tyrosine 196, tyrosine 248, and valine 266.

The protein belongs to the glutaminase family. In terms of assembly, homotetramer.

It carries out the reaction L-glutamine + H2O = L-glutamate + NH4(+). This Parabacteroides distasonis (strain ATCC 8503 / DSM 20701 / CIP 104284 / JCM 5825 / NCTC 11152) protein is Glutaminase.